We begin with the raw amino-acid sequence, 276 residues long: 4-chlorobenzoyl coenzyme A dehalogenase-1 (276 aa).

Residue 66–71 (AGFDLE) coordinates substrate. H93 (proton acceptor) is an active-site residue. G117 lines the substrate pocket. D148 serves as the catalytic Nucleophile. R261 is a substrate binding site.

This sequence belongs to the enoyl-CoA hydratase/isomerase family. Homotetramer.

The catalysed reaction is 4-chlorobenzoyl-CoA + H2O = 4-hydroxybenzoyl-CoA + chloride + H(+). Its pathway is xenobiotic degradation; 4-chlorobenzoate degradation; 4-hydroxybenzoate from 4-chlorobenzoate: step 2/3. Dehalogenates 4-chlorobenzoyl-CoA, 4-iodobenzoyl-CoA, 4-bromobenzoyl-CoA and, at a slower rate, 4-fluorobenzoyl-CoA. Does not dehalogenate 2-chlorobenzoyl-CoA or 3-chlorobenzoyl-CoA. The protein is 4-chlorobenzoyl coenzyme A dehalogenase-1 of Arthrobacter sp.